The primary structure comprises 260 residues: DNA repair protein RecO (260 aa).

Belongs to the RecO family.

Functionally, involved in DNA repair and RecF pathway recombination. This chain is DNA repair protein RecO, found in Streptococcus gordonii (strain Challis / ATCC 35105 / BCRC 15272 / CH1 / DL1 / V288).